The chain runs to 61 residues: Temporin-SN4 (61 aa).

The signal sequence occupies residues 1–22; the sequence is MFTLKKTLLLLFFLGTINLSLC. Positions 23 to 44 are cleaved as a propeptide — removed in mature form; sequence EEERNAEEERRDGDDEMDVEVK. The residue at position 61 (Lys-61) is a Lysine amide.

The protein belongs to the frog skin active peptide (FSAP) family. Temporin subfamily. In terms of tissue distribution, expressed by the skin glands.

It localises to the secreted. Antimicrobial peptide. Active against some Gram-positive and Gram-negative bacterial strains. Active against fungus C.glabrata 090902 but not against C.albicans ATCC 12231. Shows weak hemolytic activity against human erythrocytes. The chain is Temporin-SN4 from Sylvirana spinulosa (Fine-spined frog).